A 213-amino-acid chain; its full sequence is Ribosomal RNA small subunit methyltransferase G (213 aa).

Residues glycine 72, phenylalanine 77, 125–126 (IE), and arginine 141 contribute to the S-adenosyl-L-methionine site.

Belongs to the methyltransferase superfamily. RNA methyltransferase RsmG family.

It localises to the cytoplasm. It carries out the reaction guanosine(527) in 16S rRNA + S-adenosyl-L-methionine = N(7)-methylguanosine(527) in 16S rRNA + S-adenosyl-L-homocysteine. Functionally, specifically methylates the N7 position of guanine in position 527 of 16S rRNA. The chain is Ribosomal RNA small subunit methyltransferase G from Sinorhizobium medicae (strain WSM419) (Ensifer medicae).